Consider the following 253-residue polypeptide: Dihydroanticapsin 7-dehydrogenase (253 aa).

Leu9–Asn31 is an NAD(+) binding site. Ser139 serves as a coordination point for substrate. Tyr152 acts as the Proton acceptor in catalysis.

It belongs to the short-chain dehydrogenases/reductases (SDR) family.

It catalyses the reaction L-dihydroanticapsin + NAD(+) = L-anticapsin + NADH + H(+). Its pathway is antibiotic biosynthesis; bacilysin biosynthesis. In terms of biological role, part of the bacABCDEFG operon responsible for the biosynthesis of bacilysin, an irreversible inactivator of the glutaminase domain of glucosamine synthetase. Catalyzes the dehydrogenation of the C7-hydroxyl group in the 4S-tetrahydrotyrosine (4S-H4Tyr) to yield anticapsin (epoxycyclohexanonyl-Ala). It is not able to oxidize the 4R-H4Tyr diastereomer and the dihydrobacilysin dipeptide (L-Ala-4S-H4Tyr dipeptide). The polypeptide is Dihydroanticapsin 7-dehydrogenase (Bacillus subtilis (strain 168)).